Reading from the N-terminus, the 251-residue chain is Ubiquinone/menaquinone biosynthesis C-methyltransferase UbiE (251 aa).

S-adenosyl-L-methionine-binding positions include threonine 74, aspartate 95, and 123–124 (NA).

It belongs to the class I-like SAM-binding methyltransferase superfamily. MenG/UbiE family.

The catalysed reaction is a 2-demethylmenaquinol + S-adenosyl-L-methionine = a menaquinol + S-adenosyl-L-homocysteine + H(+). It catalyses the reaction a 2-methoxy-6-(all-trans-polyprenyl)benzene-1,4-diol + S-adenosyl-L-methionine = a 5-methoxy-2-methyl-3-(all-trans-polyprenyl)benzene-1,4-diol + S-adenosyl-L-homocysteine + H(+). The protein operates within quinol/quinone metabolism; menaquinone biosynthesis; menaquinol from 1,4-dihydroxy-2-naphthoate: step 2/2. It participates in cofactor biosynthesis; ubiquinone biosynthesis. In terms of biological role, methyltransferase required for the conversion of demethylmenaquinol (DMKH2) to menaquinol (MKH2) and the conversion of 2-polyprenyl-6-methoxy-1,4-benzoquinol (DDMQH2) to 2-polyprenyl-3-methyl-6-methoxy-1,4-benzoquinol (DMQH2). The polypeptide is Ubiquinone/menaquinone biosynthesis C-methyltransferase UbiE (Psychromonas ingrahamii (strain DSM 17664 / CCUG 51855 / 37)).